Here is a 219-residue protein sequence, read N- to C-terminus: UPF0319 protein MS0844 (219 aa).

Positions 1–21 are cleaved as a signal peptide; that stretch reads MKFRLTALAVAALLTSTASFA.

The protein belongs to the UPF0319 family.

The protein is UPF0319 protein MS0844 of Mannheimia succiniciproducens (strain KCTC 0769BP / MBEL55E).